The chain runs to 659 residues: Anoctamin-10 (659 aa).

The Cytoplasmic portion of the chain corresponds to 1-207 (MRVTLSTLDT…DSIRSYFGET (207 aa)). The chain crosses the membrane as a helical span at residues 208 to 228 (IALYFGFLEYFTFALIPMAII). The Extracellular segment spans residues 229-240 (GLPYYLFVWEDY). A helical membrane pass occupies residues 241-261 (DKYVIFASFNLIWSTVILEVW). Residues 262 to 316 (KRGCANMTYRWGTLVMKRQFEEPRPGFHGVLGINSVTGREEPLYSSYKRQLRIYL) lie on the Cytoplasmic side of the membrane. Residues 317–337 (VSLPFVCLCLYFSLYVMMIYF) form a helical membrane-spanning segment. Residues 338-352 (DMEDWALSLHEDSGS) lie on the Extracellular side of the membrane. A helical transmembrane segment spans residues 353-373 (EWTSLLLYVPSIVYAVVIEIM). At 374–400 (NRLYRYAAEFLTSWENHRLESAYQNHL) the chain is on the cytoplasmic side. The chain crosses the membrane as a helical span at residues 401–421 (VLKVLVFNFLNCFASLFYIAF). The Extracellular portion of the chain corresponds to 422 to 500 (VLKDMKLLRQ…YLGTFDDYLE (79 aa)). Residues 501 to 521 (LFLQFGYVSLFSCVYPLAAAF) form a helical membrane-spanning segment. At 522–553 (AVLNNFTEVNSDALKMCRVFKRPFAEPSASIG) the chain is on the cytoplasmic side. The chain crosses the membrane as a helical span at residues 554–574 (VWQLAFETMSVISVVTNCALI). Residues 575-590 (GMSPQVNAVFPESKTD) are Extracellular-facing. Residues 591–611 (LVLIVVAVEHALLALKFILAF) traverse the membrane as a helical segment. At 612–659 (AIPDKPRHIQQKLARLEFESLEALKQQQMKLVAENLKEEYQEDGKEAT) the chain is on the cytoplasmic side.

The protein belongs to the anoctamin family. As to expression, predominant expression seen in epithelial tissues.

The protein localises to the cell membrane. Its function is as follows. Does not exhibit calcium-activated chloride channel (CaCC) activity. Can inhibit the activity of ANO1. This Mus musculus (Mouse) protein is Anoctamin-10 (Ano10).